Here is a 1070-residue protein sequence, read N- to C-terminus: Ubiquitin-protein ligase E3B (1070 aa).

Residue methionine 1 is modified to N-acetylmethionine. The IQ domain maps to 29–58; sequence RERSAVTIQALVRSFLCRRRLHRDIRKEID. Phosphoserine is present on serine 421. The 367-residue stretch at 704–1070 folds into the HECT domain; it reads SQHAMKGVIR…ISMNTGFELS (367 aa). Cysteine 1038 functions as the Glycyl thioester intermediate in the catalytic mechanism.

As to expression, widely expressed. High expression is observed in developing central nervous system.

It localises to the postsynaptic density. The catalysed reaction is S-ubiquitinyl-[E2 ubiquitin-conjugating enzyme]-L-cysteine + [acceptor protein]-L-lysine = [E2 ubiquitin-conjugating enzyme]-L-cysteine + N(6)-ubiquitinyl-[acceptor protein]-L-lysine.. It functions in the pathway protein modification; protein ubiquitination. E3 ubiquitin-protein ligase which accepts ubiquitin from an E2 ubiquitin-conjugating enzyme in the form of a thioester and then directly transfers the ubiquitin to targeted substrates. Ubiquitinates BCKDK and targets it for degradation, thereby regulating various metabolic processes. Involved in the positive regulation of neurite branching in hippocampal neurons and the control of neuronal spine number and morphology, through the ubiquitination of PPP3CC. This Mus musculus (Mouse) protein is Ubiquitin-protein ligase E3B (Ube3b).